Consider the following 381-residue polypeptide: Homoserine O-succinyltransferase (381 aa).

Residues 45–360 (NAVLVCHALN…PHGHDAFLLD (316 aa)) enclose the AB hydrolase-1 domain. Ser151 serves as the catalytic Nucleophile. Arg221 contributes to the substrate binding site. Residues Asp321 and His354 contribute to the active site. Asp355 lines the substrate pocket.

The protein belongs to the AB hydrolase superfamily. MetX family. As to quaternary structure, homodimer.

Its subcellular location is the cytoplasm. The enzyme catalyses L-homoserine + succinyl-CoA = O-succinyl-L-homoserine + CoA. It functions in the pathway amino-acid biosynthesis; L-methionine biosynthesis via de novo pathway; O-succinyl-L-homoserine from L-homoserine: step 1/1. Functionally, transfers a succinyl group from succinyl-CoA to L-homoserine, forming succinyl-L-homoserine. This chain is Homoserine O-succinyltransferase, found in Burkholderia cenocepacia (strain ATCC BAA-245 / DSM 16553 / LMG 16656 / NCTC 13227 / J2315 / CF5610) (Burkholderia cepacia (strain J2315)).